The following is a 271-amino-acid chain: MPELPEVEVCRLGISPHVIAQEVSEVIIRNKRLRWPIPDEVCSAVGLPVLKVERRAKYLLLRFSTGTLLLHLGMSGTIRVIEQDTPVAKHDHFDLVFKHGKSLRLNDPRRFGAVLWLANDEDELGLLAKLGPEPLSDDFAEGYLFSKAKNRKVPIKTFLMNNHVVVGVGNIYANEALFQAGILPTAKAKDIDEHRMNSLTAIIKKVLSAAIAQGGTTLKDFTQADGRPGYFAQSLMVYGRAGEACVTCKTKLQEIRQSNRSSVFCPSCQQD.

The Schiff-base intermediate with DNA role is filled by proline 2. Glutamate 3 functions as the Proton donor in the catalytic mechanism. Lysine 57 (proton donor; for beta-elimination activity) is an active-site residue. DNA is bound by residues histidine 90, arginine 109, and arginine 151. The segment at 236-270 (MVYGRAGEACVTCKTKLQEIRQSNRSSVFCPSCQQ) adopts an FPG-type zinc-finger fold. The Proton donor; for delta-elimination activity role is filled by arginine 260.

The protein belongs to the FPG family. As to quaternary structure, monomer. Requires Zn(2+) as cofactor.

The catalysed reaction is Hydrolysis of DNA containing ring-opened 7-methylguanine residues, releasing 2,6-diamino-4-hydroxy-5-(N-methyl)formamidopyrimidine.. The enzyme catalyses 2'-deoxyribonucleotide-(2'-deoxyribose 5'-phosphate)-2'-deoxyribonucleotide-DNA = a 3'-end 2'-deoxyribonucleotide-(2,3-dehydro-2,3-deoxyribose 5'-phosphate)-DNA + a 5'-end 5'-phospho-2'-deoxyribonucleoside-DNA + H(+). Its function is as follows. Involved in base excision repair of DNA damaged by oxidation or by mutagenic agents. Acts as a DNA glycosylase that recognizes and removes damaged bases. Has a preference for oxidized purines, such as 7,8-dihydro-8-oxoguanine (8-oxoG). Has AP (apurinic/apyrimidinic) lyase activity and introduces nicks in the DNA strand. Cleaves the DNA backbone by beta-delta elimination to generate a single-strand break at the site of the removed base with both 3'- and 5'-phosphates. The sequence is that of Formamidopyrimidine-DNA glycosylase from Colwellia psychrerythraea (strain 34H / ATCC BAA-681) (Vibrio psychroerythus).